Reading from the N-terminus, the 381-residue chain is MNLNFMPLLHAYNHASIDFHFNSSARDFCVHEVPLYEFSNTGEHAVIQVRKSGLSTLEMLQVFSQILGVRIAELGYAGLKDKNALTTQFVSLPKKYAPLLEKNTHNLQERNLKILSLNYHHNKIKLGHLKGNRFFMRFKKMTPLNAQKTEQVLEQIVQFGMPNYFGSQRFGKFNDNHQEGLKILQNQTKFAHQKLNAFLISSYQSYLFNSLLSKRLEISKIISAFSLKENLEFFKQKNLSVDSNTLKTLKNQAHPFKILEGDVMCHYPYGKFFDALELEKESERFLKKEVVPTGLLDGKKALYAKNLSFEIEKEFRHNLLSSHAKTLGSRRFFWVFAENVTSQYIKEKAQFELGFYLPKGSYASALLKEIKHEKGENNDEF.

Aspartate 81 serves as the catalytic Nucleophile. Residues 160–335 (GMPNYFGSQR…TLGSRRFFWV (176 aa)) enclose the TRUD domain.

It belongs to the pseudouridine synthase TruD family.

The catalysed reaction is uridine(13) in tRNA = pseudouridine(13) in tRNA. Functionally, responsible for synthesis of pseudouridine from uracil-13 in transfer RNAs. The polypeptide is tRNA pseudouridine synthase D (Helicobacter pylori (strain HPAG1)).